A 293-amino-acid polypeptide reads, in one-letter code: Bifunctional protein FolD (293 aa).

NADP(+) is bound by residues 166–168, Ser191, and Ile232; that span reads GRS.

Belongs to the tetrahydrofolate dehydrogenase/cyclohydrolase family. In terms of assembly, homodimer.

The catalysed reaction is (6R)-5,10-methylene-5,6,7,8-tetrahydrofolate + NADP(+) = (6R)-5,10-methenyltetrahydrofolate + NADPH. It catalyses the reaction (6R)-5,10-methenyltetrahydrofolate + H2O = (6R)-10-formyltetrahydrofolate + H(+). The protein operates within one-carbon metabolism; tetrahydrofolate interconversion. In terms of biological role, catalyzes the oxidation of 5,10-methylenetetrahydrofolate to 5,10-methenyltetrahydrofolate and then the hydrolysis of 5,10-methenyltetrahydrofolate to 10-formyltetrahydrofolate. This chain is Bifunctional protein FolD, found in Synechococcus sp. (strain JA-2-3B'a(2-13)) (Cyanobacteria bacterium Yellowstone B-Prime).